Consider the following 383-residue polypeptide: Probable 2-succinylbenzoate--CoA ligase (383 aa).

It belongs to the ATP-dependent AMP-binding enzyme family. MenE subfamily.

It catalyses the reaction 2-succinylbenzoate + ATP + CoA = 2-succinylbenzoyl-CoA + AMP + diphosphate. It functions in the pathway quinol/quinone metabolism; 1,4-dihydroxy-2-naphthoate biosynthesis; 1,4-dihydroxy-2-naphthoate from chorismate: step 5/7. Its pathway is quinol/quinone metabolism; menaquinone biosynthesis. Its function is as follows. Converts 2-succinylbenzoate (OSB) to 2-succinylbenzoyl-CoA (OSB-CoA). May be involved in the biosynthesis of menaquinone. The polypeptide is Probable 2-succinylbenzoate--CoA ligase (menE) (Mycobacterium tuberculosis (strain CDC 1551 / Oshkosh)).